Reading from the N-terminus, the 446-residue chain is tRNA modification GTPase MnmE (446 aa).

The (6S)-5-formyl-5,6,7,8-tetrahydrofolate site is built by arginine 28, glutamate 85, and lysine 124. The TrmE-type G domain occupies 220–372 (GLTVVLVGQP…LRAKLLQAAG (153 aa)). Position 230 (asparagine 230) interacts with K(+). GTP is bound by residues 230–235 (NVGKSS), 249–255 (TEIAGTT), and 274–277 (DTAG). Serine 234 contributes to the Mg(2+) binding site. Positions 249, 251, and 254 each coordinate K(+). Threonine 255 is a binding site for Mg(2+). Lysine 446 is a binding site for (6S)-5-formyl-5,6,7,8-tetrahydrofolate.

Belongs to the TRAFAC class TrmE-Era-EngA-EngB-Septin-like GTPase superfamily. TrmE GTPase family. In terms of assembly, homodimer. Heterotetramer of two MnmE and two MnmG subunits. It depends on K(+) as a cofactor.

The protein resides in the cytoplasm. Its function is as follows. Exhibits a very high intrinsic GTPase hydrolysis rate. Involved in the addition of a carboxymethylaminomethyl (cmnm) group at the wobble position (U34) of certain tRNAs, forming tRNA-cmnm(5)s(2)U34. This is tRNA modification GTPase MnmE from Thiobacillus denitrificans (strain ATCC 25259 / T1).